Reading from the N-terminus, the 582-residue chain is Phosphoribosylaminoimidazole carboxylase (582 aa).

The ATP-grasp domain maps to 114–305; sequence KKYLAERGVA…QFENHLRAIL (192 aa). 143–200 provides a ligand contact to ATP; sequence AGRLGLPLMLKAKTLAYDGRGNSPLKSASSGDIQASLKFLGDRPLYAEGWAPFVKEVA.

In the C-terminal section; belongs to the AIR carboxylase family. Class I subfamily.

It catalyses the reaction 5-amino-1-(5-phospho-D-ribosyl)imidazole-4-carboxylate + H(+) = 5-amino-1-(5-phospho-beta-D-ribosyl)imidazole + CO2. The protein operates within purine metabolism; IMP biosynthesis via de novo pathway; 5-amino-1-(5-phospho-D-ribosyl)imidazole-4-carboxylate from 5-amino-1-(5-phospho-D-ribosyl)imidazole (carboxylase route): step 1/1. This is Phosphoribosylaminoimidazole carboxylase (ADE2) from Cryptococcus neoformans var. neoformans serotype D (strain JEC21 / ATCC MYA-565) (Filobasidiella neoformans).